Here is a 429-residue protein sequence, read N- to C-terminus: Serine--tRNA ligase (429 aa).

Position 235–237 (235–237) interacts with L-serine; the sequence is TAE. 266 to 268 provides a ligand contact to ATP; that stretch reads RSE. Glu289 is a binding site for L-serine. 353–356 serves as a coordination point for ATP; that stretch reads EISS. Residue Ser389 coordinates L-serine.

It belongs to the class-II aminoacyl-tRNA synthetase family. Type-1 seryl-tRNA synthetase subfamily. In terms of assembly, homodimer. The tRNA molecule binds across the dimer.

The protein resides in the cytoplasm. It catalyses the reaction tRNA(Ser) + L-serine + ATP = L-seryl-tRNA(Ser) + AMP + diphosphate + H(+). The enzyme catalyses tRNA(Sec) + L-serine + ATP = L-seryl-tRNA(Sec) + AMP + diphosphate + H(+). It functions in the pathway aminoacyl-tRNA biosynthesis; selenocysteinyl-tRNA(Sec) biosynthesis; L-seryl-tRNA(Sec) from L-serine and tRNA(Sec): step 1/1. Its function is as follows. Catalyzes the attachment of serine to tRNA(Ser). Is also able to aminoacylate tRNA(Sec) with serine, to form the misacylated tRNA L-seryl-tRNA(Sec), which will be further converted into selenocysteinyl-tRNA(Sec). The protein is Serine--tRNA ligase of Haemophilus influenzae (strain PittEE).